A 201-amino-acid polypeptide reads, in one-letter code: Glutathione peroxidase 1 (201 aa).

The residue at position 32 (Ser32) is a Phosphoserine. Sec47 is a catalytic residue. A non-standard amino acid (selenocysteine) is located at residue Sec47. 2 positions are modified to N6-acetyllysine; alternate: Lys86 and Lys112. N6-succinyllysine; alternate is present on residues Lys86 and Lys112. Lys119 carries the post-translational modification N6-acetyllysine. Lys146 is subject to N6-acetyllysine; alternate. At Lys146 the chain carries N6-succinyllysine; alternate. Phosphoserine occurs at positions 195 and 199.

It belongs to the glutathione peroxidase family. In terms of assembly, homotetramer. Interacts with MIEN1. In terms of processing, during periods of oxidative stress, Sec-47 may react with a superoxide radical, irreversibly lose hydroselenide and be converted to dehydroalanine. As to expression, expressed in liver and lung.

The protein localises to the cytoplasm. Its subcellular location is the mitochondrion. It carries out the reaction 2 glutathione + H2O2 = glutathione disulfide + 2 H2O. It catalyses the reaction a hydroperoxy polyunsaturated fatty acid + 2 glutathione = a hydroxy polyunsaturated fatty acid + glutathione disulfide + H2O. The enzyme catalyses tert-butyl hydroperoxide + 2 glutathione = tert-butanol + glutathione disulfide + H2O. The catalysed reaction is cumene hydroperoxide + 2 glutathione = 2-phenylpropan-2-ol + glutathione disulfide + H2O. It carries out the reaction (13S)-hydroperoxy-(9Z,11E)-octadecadienoate + 2 glutathione = (13S)-hydroxy-(9Z,11E)-octadecadienoate + glutathione disulfide + H2O. It catalyses the reaction (9S)-hydroperoxy-(10E,12Z)-octadecadienoate + 2 glutathione = (9S)-hydroxy-(10E,12Z)-octadecadienoate + glutathione disulfide + H2O. The enzyme catalyses (5S)-hydroperoxy-(6E,8Z,11Z,14Z)-eicosatetraenoate + 2 glutathione = (5S)-hydroxy-(6E,8Z,11Z,14Z)-eicosatetraenoate + glutathione disulfide + H2O. The catalysed reaction is (12S)-hydroperoxy-(5Z,8Z,10E,14Z)-eicosatetraenoate + 2 glutathione = (12S)-hydroxy-(5Z,8Z,10E,14Z)-eicosatetraenoate + glutathione disulfide + H2O. It carries out the reaction (12R)-hydroperoxy-(5Z,8Z,10E,14Z)-eicosatetraenoate + 2 glutathione = (12R)-hydroxy-(5Z,8Z,10E,14Z)-eicosatetraenoate + glutathione disulfide + H2O. It catalyses the reaction (15S)-hydroperoxy-(5Z,8Z,11Z,13E)-eicosatetraenoate + 2 glutathione = (15S)-hydroxy-(5Z,8Z,11Z,13E)-eicosatetraenoate + glutathione disulfide + H2O. The enzyme catalyses (5S)-hydroperoxy-(6E,8Z,11Z,14Z,17Z)-eicosapentaenoate + 2 glutathione = (5S)-hydroxy-(6E,8Z,11Z,14Z,17Z)-eicosapentaenoate + glutathione disulfide + H2O. The catalysed reaction is (12S)-hydroperoxy-(5Z,8Z,10E,14Z,17Z)-eicosapentaenoate + 2 glutathione = (12S)-hydroxy-(5Z,8Z,10E,14Z,17Z)-eicosapentaenoate + glutathione disulfide + H2O. It carries out the reaction (15S)-hydroperoxy-(5Z,8Z,11Z,13E,17Z)-eicosapentaenoate + 2 glutathione = (15S)-hydroxy-(5Z,8Z,11Z,13E,17Z)-eicosapentaenoate + glutathione disulfide + H2O. It catalyses the reaction (15S)-hydroperoxy-(11Z,13E)-eicosadienoate + 2 glutathione = (15S)-hydroxy-(11Z,13E)-eicosadienoate + glutathione disulfide + H2O. The enzyme catalyses (17S)-hydroperoxy-(4Z,7Z,10Z,13Z,15E,19Z)-docosahexaenoate + 2 glutathione = (17S)-hydroxy-(4Z,7Z,10Z,13Z,15E,19Z)-docosahexaenoate + glutathione disulfide + H2O. Its function is as follows. Catalyzes the reduction of hydroperoxides in a glutathione-dependent manner thus regulating cellular redox homeostasis. Can reduce small soluble hydroperoxides such as H2O2, cumene hydroperoxide and tert-butyl hydroperoxide, as well as several fatty acid-derived hydroperoxides. In platelets catalyzes the reduction of 12-hydroperoxyeicosatetraenoic acid, the primary product of the arachidonate 12-lipoxygenase pathway. In Rattus norvegicus (Rat), this protein is Glutathione peroxidase 1.